The primary structure comprises 137 residues: Nucleoside diphosphate kinase (137 aa).

ATP is bound by residues lysine 9, phenylalanine 57, arginine 85, threonine 91, arginine 102, and asparagine 112. Histidine 115 acts as the Pros-phosphohistidine intermediate in catalysis.

It belongs to the NDK family. In terms of assembly, homotetramer. It depends on Mg(2+) as a cofactor.

The protein localises to the cytoplasm. The enzyme catalyses a 2'-deoxyribonucleoside 5'-diphosphate + ATP = a 2'-deoxyribonucleoside 5'-triphosphate + ADP. The catalysed reaction is a ribonucleoside 5'-diphosphate + ATP = a ribonucleoside 5'-triphosphate + ADP. In terms of biological role, major role in the synthesis of nucleoside triphosphates other than ATP. The ATP gamma phosphate is transferred to the NDP beta phosphate via a ping-pong mechanism, using a phosphorylated active-site intermediate. In Wolinella succinogenes (strain ATCC 29543 / DSM 1740 / CCUG 13145 / JCM 31913 / LMG 7466 / NCTC 11488 / FDC 602W) (Vibrio succinogenes), this protein is Nucleoside diphosphate kinase.